The following is a 210-amino-acid chain: Large ribosomal subunit protein uL3 (210 aa).

The protein belongs to the universal ribosomal protein uL3 family. In terms of assembly, part of the 50S ribosomal subunit. Forms a cluster with proteins L14 and L19.

One of the primary rRNA binding proteins, it binds directly near the 3'-end of the 23S rRNA, where it nucleates assembly of the 50S subunit. The protein is Large ribosomal subunit protein uL3 of Pseudothermotoga lettingae (strain ATCC BAA-301 / DSM 14385 / NBRC 107922 / TMO) (Thermotoga lettingae).